The primary structure comprises 304 residues: Murein tetrapeptide carboxypeptidase (304 aa).

The Nucleophile role is filled by serine 106. Residues glutamate 200 and histidine 270 each act as charge relay system in the active site.

The protein belongs to the peptidase S66 family.

It localises to the cytoplasm. It carries out the reaction N-acetyl-D-glucosaminyl-N-acetylmuramoyl-L-alanyl-meso-2,6-diaminoheptanedioyl-D-alanine + H2O = N-acetyl-D-glucosaminyl-N-acetylmuramoyl-L-alanyl-meso-2,6-diaminoheptanedioate + D-alanine. The protein operates within cell wall biogenesis; peptidoglycan recycling. Functionally, releases the terminal D-alanine residue from the cytoplasmic tetrapeptide recycling product L-Ala-gamma-D-Glu-meso-Dap-D-Ala. Can also cleave D-Ala from murein derivatives containing the tetrapeptide, i.e. MurNAc-tetrapeptide, UDP-MurNAc-tetrapeptide, GlcNAc-MurNAc-tetrapeptide, and GlcNAc-anhMurNAc-tetrapeptide. Does not act on murein sacculi or cross-linked muropeptides. The tripeptides produced by the LcdA reaction can then be reused as peptidoglycan building blocks; LcdA is thereby involved in murein recycling. The chain is Murein tetrapeptide carboxypeptidase (ldcA) from Escherichia coli O6:H1 (strain CFT073 / ATCC 700928 / UPEC).